Reading from the N-terminus, the 399-residue chain is Leu/Ile/Val-binding protein homolog 7 (399 aa).

The N-terminal stretch at 1–22 is a signal peptide; it reads MEKHLIALSVAALLAGAAPASA.

Belongs to the leucine-binding protein family.

In terms of biological role, component of an amino-acid transport system. The chain is Leu/Ile/Val-binding protein homolog 7 from Brucella melitensis biotype 1 (strain ATCC 23456 / CCUG 17765 / NCTC 10094 / 16M).